We begin with the raw amino-acid sequence, 128 residues long: Azurin (128 aa).

The 128-residue stretch at 1–128 (AECKVTVDST…AMMKGTVTLK (128 aa)) folds into the Plastocyanin-like domain. Cys3 and Cys26 are joined by a disulfide. Cu cation-binding residues include His46, Cys112, His117, and Met121.

Its subcellular location is the periplasm. Functionally, transfers electrons from cytochrome c551 to cytochrome oxidase. The chain is Azurin from Pseudomonas fluorescens biotype C.